The sequence spans 177 residues: ATP synthase subunit delta (177 aa).

This sequence belongs to the ATPase delta chain family. In terms of assembly, F-type ATPases have 2 components, F(1) - the catalytic core - and F(0) - the membrane proton channel. F(1) has five subunits: alpha(3), beta(3), gamma(1), delta(1), epsilon(1). F(0) has three main subunits: a(1), b(2) and c(10-14). The alpha and beta chains form an alternating ring which encloses part of the gamma chain. F(1) is attached to F(0) by a central stalk formed by the gamma and epsilon chains, while a peripheral stalk is formed by the delta and b chains.

The protein localises to the cell inner membrane. F(1)F(0) ATP synthase produces ATP from ADP in the presence of a proton or sodium gradient. F-type ATPases consist of two structural domains, F(1) containing the extramembraneous catalytic core and F(0) containing the membrane proton channel, linked together by a central stalk and a peripheral stalk. During catalysis, ATP synthesis in the catalytic domain of F(1) is coupled via a rotary mechanism of the central stalk subunits to proton translocation. Functionally, this protein is part of the stalk that links CF(0) to CF(1). It either transmits conformational changes from CF(0) to CF(1) or is implicated in proton conduction. The protein is ATP synthase subunit delta of Sodalis glossinidius (strain morsitans).